Consider the following 123-residue polypeptide: Immunoglobulin lambda variable 5-39 (123 aa).

An N-terminal signal peptide occupies residues 1-19 (MAWTPLLLLLLSHCTGSLS). The segment at 20-44 (QPVLTQPTSLSASPGASARFTCTLR) is framework-1. In terms of domain architecture, Ig-like spans 21–123 (PVLTQPTSLS…YCAIWYSSTS (103 aa)). The cysteines at positions 41 and 115 are disulfide-linked. Residues 45-53 (SGINVGTYR) are complementarity-determining-1. Residues 54–70 (IYWYQQKPGSLPRYLLR) are framework-2. A complementarity-determining-2 region spans residues 71–77 (YKSDSDK). The framework-3 stretch occupies residues 78-115 (QQGSGVPSRFSGSKDASTNAGLLLISGLQSEDEADYYC). The complementarity-determining-3 stretch occupies residues 116-123 (AIWYSSTS).

Immunoglobulins are composed of two identical heavy chains and two identical light chains; disulfide-linked.

It is found in the secreted. The protein localises to the cell membrane. V region of the variable domain of immunoglobulin light chains that participates in the antigen recognition. Immunoglobulins, also known as antibodies, are membrane-bound or secreted glycoproteins produced by B lymphocytes. In the recognition phase of humoral immunity, the membrane-bound immunoglobulins serve as receptors which, upon binding of a specific antigen, trigger the clonal expansion and differentiation of B lymphocytes into immunoglobulins-secreting plasma cells. Secreted immunoglobulins mediate the effector phase of humoral immunity, which results in the elimination of bound antigens. The antigen binding site is formed by the variable domain of one heavy chain, together with that of its associated light chain. Thus, each immunoglobulin has two antigen binding sites with remarkable affinity for a particular antigen. The variable domains are assembled by a process called V-(D)-J rearrangement and can then be subjected to somatic hypermutations which, after exposure to antigen and selection, allow affinity maturation for a particular antigen. The polypeptide is Immunoglobulin lambda variable 5-39 (Homo sapiens (Human)).